The sequence spans 131 residues: Small ribosomal subunit protein uS11 (131 aa).

It belongs to the universal ribosomal protein uS11 family. Part of the 30S ribosomal subunit. Interacts with proteins S7 and S18. Binds to IF-3.

Its function is as follows. Located on the platform of the 30S subunit, it bridges several disparate RNA helices of the 16S rRNA. Forms part of the Shine-Dalgarno cleft in the 70S ribosome. In Trichodesmium erythraeum (strain IMS101), this protein is Small ribosomal subunit protein uS11.